The sequence spans 272 residues: 2-amino-3,7-dideoxy-D-threo-hept-6-ulosonate synthase (272 aa).

Residue aspartate 33 is the Proton acceptor of the active site. 1-deoxy-D-threo-hexo-2,5-diulose 6-phosphate is bound by residues 33-37 (DHGVS) and 153-155 (YPR). Residue tyrosine 153 is the Proton donor of the active site. Residue lysine 184 is the Schiff-base intermediate with substrate of the active site. 1-deoxy-D-threo-hexo-2,5-diulose 6-phosphate-binding positions include 209 to 210 (GG) and 237 to 238 (GR).

This sequence belongs to the DeoC/FbaB aldolase family. ADHS subfamily. In terms of assembly, homodecamer.

It catalyses the reaction 1-deoxy-D-threo-hexo-2,5-diulose 6-phosphate + L-aspartate 4-semialdehyde = 2,3-dioxopropyl phosphate + 2-amino-2,3,7-trideoxy-D-lyxo-hept-6-ulosonate. In terms of biological role, catalyzes a transaldol reaction between 6-deoxy-5-ketofructose 1-phosphate (DKFP) and L-aspartate semialdehyde (ASA) with an elimination of hydroxypyruvaldehyde phosphate to yield 2-amino-3,7-dideoxy-D-threo-hept-6-ulosonate (ADH). Plays a key role in an alternative pathway of the biosynthesis of 3-dehydroquinate (DHQ), which is involved in the canonical pathway for the biosynthesis of aromatic amino acids and which is also a precursor for the biosynthesis of p-aminobenzoic acid (PABA) in M.maripaludis. Does not possess fructose-bisphosphate (FBP) aldolase activity. In Methanococcus maripaludis (strain DSM 14266 / JCM 13030 / NBRC 101832 / S2 / LL), this protein is 2-amino-3,7-dideoxy-D-threo-hept-6-ulosonate synthase.